We begin with the raw amino-acid sequence, 124 residues long: Ribosome-binding factor A (124 aa).

Belongs to the RbfA family. As to quaternary structure, monomer. Binds 30S ribosomal subunits, but not 50S ribosomal subunits or 70S ribosomes.

It is found in the cytoplasm. One of several proteins that assist in the late maturation steps of the functional core of the 30S ribosomal subunit. Associates with free 30S ribosomal subunits (but not with 30S subunits that are part of 70S ribosomes or polysomes). Required for efficient processing of 16S rRNA. May interact with the 5'-terminal helix region of 16S rRNA. This Sorangium cellulosum (strain So ce56) (Polyangium cellulosum (strain So ce56)) protein is Ribosome-binding factor A.